A 287-amino-acid chain; its full sequence is Pyridoxal 5'-phosphate synthase subunit PdxS (287 aa).

Residue Asp-21 coordinates D-ribose 5-phosphate. Residue Lys-78 is the Schiff-base intermediate with D-ribose 5-phosphate of the active site. Gly-150 serves as a coordination point for D-ribose 5-phosphate. Arg-162 serves as a coordination point for D-glyceraldehyde 3-phosphate. D-ribose 5-phosphate-binding positions include Gly-211 and 232 to 233 (GS).

This sequence belongs to the PdxS/SNZ family. As to quaternary structure, in the presence of PdxT, forms a dodecamer of heterodimers.

It catalyses the reaction aldehydo-D-ribose 5-phosphate + D-glyceraldehyde 3-phosphate + L-glutamine = pyridoxal 5'-phosphate + L-glutamate + phosphate + 3 H2O + H(+). It functions in the pathway cofactor biosynthesis; pyridoxal 5'-phosphate biosynthesis. Its function is as follows. Catalyzes the formation of pyridoxal 5'-phosphate from ribose 5-phosphate (RBP), glyceraldehyde 3-phosphate (G3P) and ammonia. The ammonia is provided by the PdxT subunit. Can also use ribulose 5-phosphate and dihydroxyacetone phosphate as substrates, resulting from enzyme-catalyzed isomerization of RBP and G3P, respectively. The sequence is that of Pyridoxal 5'-phosphate synthase subunit PdxS from Tropheryma whipplei (strain Twist) (Whipple's bacillus).